Reading from the N-terminus, the 713-residue chain is Ribosomal RNA large subunit methyltransferase K/L (713 aa).

Positions threonine 46 to leucine 157 constitute a THUMP domain.

The protein belongs to the methyltransferase superfamily. RlmKL family.

The protein localises to the cytoplasm. The enzyme catalyses guanosine(2445) in 23S rRNA + S-adenosyl-L-methionine = N(2)-methylguanosine(2445) in 23S rRNA + S-adenosyl-L-homocysteine + H(+). The catalysed reaction is guanosine(2069) in 23S rRNA + S-adenosyl-L-methionine = N(2)-methylguanosine(2069) in 23S rRNA + S-adenosyl-L-homocysteine + H(+). Specifically methylates the guanine in position 2445 (m2G2445) and the guanine in position 2069 (m7G2069) of 23S rRNA. This Syntrophotalea carbinolica (strain DSM 2380 / NBRC 103641 / GraBd1) (Pelobacter carbinolicus) protein is Ribosomal RNA large subunit methyltransferase K/L.